Consider the following 780-residue polypeptide: Pumilio domain-containing protein C4G8.03c (780 aa).

Disordered stretches follow at residues 1–29 (MVNRDAYNELNLNKKSQETNRKPSPLSSY), 298–330 (LSHFPDHLDPSRIPSPYQPSSLQPLESRKLHSK), and 358–411 (NHHS…GKTV). Positions 298-307 (LSHFPDHLDP) are enriched in basic and acidic residues. The segment covering 311–322 (PSPYQPSSLQPL) has biased composition (low complexity). Residues 358-382 (NHHSSLSMDNDPTNVSTKNRNNQTV) are compositionally biased toward polar residues. The PUM-HD domain maps to 435 to 778 (EKSDDLSNLL…HILAKLTSST (344 aa)). Pumilio repeat units lie at residues 462-497 (GFLGHLSTICKDQYGCRYLQKLLDENPKVNASLFFP), 498-533 (EIRQSVVQLMIDPFGNYMCQKLFVYASREQKLSMLN), 534-569 (GIGEGIVDICSNLYGTRSMQNIIDKLTSNEQISLLL), 570-606 (KIIIPSLTTLACDNNGTHVLQKCIAKFPPEKLEPLFL), 607-642 (SMEENLITLATNRHGCCILQRCLDRTNGDIQERLVN), 643-678 (SIIKSCLLLVQNAYGNYLVQHVLELNIQPYTERIIE), 679-714 (KFFGNICKLSLQKFSSNAIEQCIRTASPSTREQMLQ), 715-752 (EFLSFPNIEQLLDDCYANYVMQRFLNVADESQKFLILR), and 753-780 (SISHVIPKIQNTRHGRHILAKLTSSTSS).

The polypeptide is Pumilio domain-containing protein C4G8.03c (Schizosaccharomyces pombe (strain 972 / ATCC 24843) (Fission yeast)).